The primary structure comprises 87 residues: UPF0367 protein P9211_01391 (87 aa).

It belongs to the UPF0367 family.

The chain is UPF0367 protein P9211_01391 from Prochlorococcus marinus (strain MIT 9211).